We begin with the raw amino-acid sequence, 85 residues long: Phosphocarrier protein HPr (85 aa).

The region spanning 1-85 (MFQRDIKITT…DLAKFLTTLK (85 aa)) is the HPr domain. Catalysis depends on H15, which acts as the Pros-phosphohistidine intermediate.

Belongs to the HPr family.

The protein resides in the cytoplasm. Its function is as follows. General (non sugar-specific) component of the phosphoenolpyruvate-dependent sugar phosphotransferase system (sugar PTS). This major carbohydrate active-transport system catalyzes the phosphorylation of incoming sugar substrates concomitantly with their translocation across the cell membrane. The phosphoryl group from phosphoenolpyruvate (PEP) is transferred to the phosphoryl carrier protein HPr by enzyme I. Phospho-HPr then transfers it to the PTS EIIA domain. The protein is Phosphocarrier protein HPr (ptsH) of Buchnera aphidicola subsp. Baizongia pistaciae (strain Bp).